A 388-amino-acid polypeptide reads, in one-letter code: Autophagy-related protein 21 (388 aa).

WD repeat units lie at residues 179 to 219 and 224 to 263; these read CHRS…KVHE and SYTA…RRRS. A L/FRRG motif motif is present at residues 220 to 224; it reads FRRGS.

This sequence belongs to the WD repeat PROPPIN family.

Its subcellular location is the cytoplasm. The protein resides in the membrane. The protein localises to the vacuole membrane. Its function is as follows. Involved in peroxisome sequestration to the vacuole during macropexophagy. Also required for microautophagy. The sequence is that of Autophagy-related protein 21 (ATG21) from Pichia angusta (Yeast).